The following is a 312-amino-acid chain: G-protein coupled receptor BILF1 (312 aa).

Topologically, residues 1-40 (MLSTMAPGSTVGTLVANMTSVNATEDACTKSYSAFLSGMT) are extracellular. Intrachain disulfides connect Cys28-Cys258 and Cys97-Cys174. A helical membrane pass occupies residues 41–61 (SLLLVLLILLTLAGILFIIFV). Residues 62 to 67 (RKLVHR) lie on the Cytoplasmic side of the membrane. Residues 68–88 (MDVWLIALLIELLLWVLGKMI) form a helical membrane-spanning segment. Residues 89-95 (QEFSSTG) lie on the Extracellular side of the membrane. A helical membrane pass occupies residues 96-116 (LCLLTQNMMFLGLMCSVWTHL). Topologically, residues 117–138 (GMALEKTLALFSRTPKRTSHRN) are cytoplasmic. A helical transmembrane segment spans residues 139-159 (VCLYLMGVFCLVLLLIIILLI). Topologically, residues 160–192 (TMGPDANLNRGPNMCREGPTKGMHTAVQGLKAG) are extracellular. A helical membrane pass occupies residues 193-213 (CYLLAAVLIVLLTVIIIWKLL). At 214-228 (RTKFGRKPRLICNVT) the chain is on the cytoplasmic side. The helical transmembrane segment at 229-249 (FTGLICAFSWFMLSLPLLFLG) threads the bilayer. Over 250-269 (EAGSLGFDCTESLVARYYPG) the chain is Extracellular. A helical transmembrane segment spans residues 270 to 290 (PAACLALLLIILYAWSFSHFM). Residues 291–312 (DSLKNQVTVTARYFRRVPSQST) are Cytoplasmic-facing.

It belongs to the Epstein-Barr virus BILF1 protein family. In terms of assembly, interacts with host CXCR4 to form higher-order heterooligomers. Interacts with host Gi heterotrimer.

Its subcellular location is the host cell membrane. It localises to the host mitochondrion outer membrane. Constitutively active, ligand-independent G protein-coupled receptor that has immunoevasive and oncogenic activities. Couples with the host inhibitory G protein (Gi) in order to disrupt the host chemokine signaling. As a consequence of its constitutive activity, mediates host CXCR4 inhibition. Enhances degradation of host major histocompatibility complex class I antigens via lysosomes, thereby modulating the antigen presentation to cytotoxic T cells. Targets selectively HLA-A, HLA-Band HLA-E molecules. Targets also newly synthesized MHC-I/peptide complexes en route to the host cell surface. Inhibits the host EIF2AK2/PKR phosphorylation. Displays tranforming activity. Utilizes its C-terminal tail to trigger host MAVS UFMylation via PARK2, resulting in selective MAVS removal from mitochondrial membranes and routing to lysosomes to prevent viral activation of the NLRP3 inflammasome. The sequence is that of G-protein coupled receptor BILF1 from Homo sapiens (Human).